The following is a 376-amino-acid chain: tRNA-specific 2-thiouridylase MnmA (376 aa).

ATP is bound by residues 10–17 (GMSGGVDS) and Met36. Residues 96 to 98 (NPD) form an interaction with target base in tRNA region. The active-site Nucleophile is the Cys101. Cys101 and Cys198 are oxidised to a cystine. Gly125 contacts ATP. The tract at residues 148-150 (KDQ) is interaction with tRNA. Cys198 (cysteine persulfide intermediate) is an active-site residue. An interaction with tRNA region spans residues 305–306 (RY).

This sequence belongs to the MnmA/TRMU family.

Its subcellular location is the cytoplasm. It carries out the reaction S-sulfanyl-L-cysteinyl-[protein] + uridine(34) in tRNA + AH2 + ATP = 2-thiouridine(34) in tRNA + L-cysteinyl-[protein] + A + AMP + diphosphate + H(+). In terms of biological role, catalyzes the 2-thiolation of uridine at the wobble position (U34) of tRNA, leading to the formation of s(2)U34. The protein is tRNA-specific 2-thiouridylase MnmA of Protochlamydia amoebophila (strain UWE25).